We begin with the raw amino-acid sequence, 366 residues long: Protein FAM131A (366 aa).

The tract at residues 342-366 (QRQASDLASSGVVSLDEDEAEPEEQ) is disordered. The span at 356 to 366 (LDEDEAEPEEQ) shows a compositional bias: acidic residues.

Belongs to the FAM131 family.

The protein is Protein FAM131A (FAM131A) of Homo sapiens (Human).